Here is a 343-residue protein sequence, read N- to C-terminus: tRNA-splicing endonuclease (343 aa).

Residues tyrosine 277, histidine 288, and lysine 319 contribute to the active site.

It belongs to the tRNA-intron endonuclease family. Archaeal long subfamily. In terms of assembly, homodimer.

It catalyses the reaction pretRNA = a 3'-half-tRNA molecule with a 5'-OH end + a 5'-half-tRNA molecule with a 2',3'-cyclic phosphate end + an intron with a 2',3'-cyclic phosphate and a 5'-hydroxyl terminus.. Endonuclease that removes tRNA introns. Cleaves pre-tRNA at the 5' and 3' splice sites to release the intron. The products are an intron and two tRNA half-molecules bearing 2',3' cyclic phosphate and 5'-OH termini. Recognizes a pseudosymmetric substrate in which 2 bulged loops of 3 bases are separated by a stem of 4 bp. This chain is tRNA-splicing endonuclease, found in Halobacterium salinarum (strain ATCC 29341 / DSM 671 / R1).